A 392-amino-acid chain; its full sequence is Succinate--CoA ligase [ADP-forming] subunit beta (392 aa).

Positions 9–236 (RDLFERHGLP…QAAVDPLEQA (228 aa)) constitute an ATP-grasp domain. Residues Lys-45, 52–54 (GRG), Ala-94, and Glu-99 contribute to the ATP site. The Mg(2+) site is built by Asn-191 and Asp-205. Substrate contacts are provided by residues Asn-256 and 318–320 (GIT).

This sequence belongs to the succinate/malate CoA ligase beta subunit family. As to quaternary structure, heterotetramer of two alpha and two beta subunits. The cofactor is Mg(2+).

It catalyses the reaction succinate + ATP + CoA = succinyl-CoA + ADP + phosphate. The enzyme catalyses GTP + succinate + CoA = succinyl-CoA + GDP + phosphate. It functions in the pathway carbohydrate metabolism; tricarboxylic acid cycle; succinate from succinyl-CoA (ligase route): step 1/1. Its function is as follows. Succinyl-CoA synthetase functions in the citric acid cycle (TCA), coupling the hydrolysis of succinyl-CoA to the synthesis of either ATP or GTP and thus represents the only step of substrate-level phosphorylation in the TCA. The beta subunit provides nucleotide specificity of the enzyme and binds the substrate succinate, while the binding sites for coenzyme A and phosphate are found in the alpha subunit. The chain is Succinate--CoA ligase [ADP-forming] subunit beta from Salinispora tropica (strain ATCC BAA-916 / DSM 44818 / JCM 13857 / NBRC 105044 / CNB-440).